A 370-amino-acid chain; its full sequence is Holliday junction branch migration complex subunit RuvB (370 aa).

A disordered region spans residues 1 to 53 (MAILSSQKQPLEPEPSKNPQSVQQPGLPPSTPEQGLLTAEVSPEERLSRTDDI). A large ATPase domain (RuvB-L) region spans residues 13-214 (PEPSKNPQSV…FGLIQRLRFY (202 aa)). The span at 43-53 (PEERLSRTDDI) shows a compositional bias: basic and acidic residues. ATP contacts are provided by residues isoleucine 53, arginine 54, glycine 95, lysine 98, threonine 99, threonine 100, 161–163 (EDF), arginine 204, tyrosine 214, and arginine 251. Threonine 99 is a binding site for Mg(2+). Residues 215-285 (EPEELSQIIL…IASEALQLFN (71 aa)) are small ATPAse domain (RuvB-S). The interval 288–370 (PCGLDWTDRR…TPPDGQLSLL (83 aa)) is head domain (RuvB-H). DNA-binding residues include arginine 343 and arginine 348.

It belongs to the RuvB family. Homohexamer. Forms an RuvA(8)-RuvB(12)-Holliday junction (HJ) complex. HJ DNA is sandwiched between 2 RuvA tetramers; dsDNA enters through RuvA and exits via RuvB. An RuvB hexamer assembles on each DNA strand where it exits the tetramer. Each RuvB hexamer is contacted by two RuvA subunits (via domain III) on 2 adjacent RuvB subunits; this complex drives branch migration. In the full resolvosome a probable DNA-RuvA(4)-RuvB(12)-RuvC(2) complex forms which resolves the HJ.

The protein resides in the cytoplasm. It catalyses the reaction ATP + H2O = ADP + phosphate + H(+). Functionally, the RuvA-RuvB-RuvC complex processes Holliday junction (HJ) DNA during genetic recombination and DNA repair, while the RuvA-RuvB complex plays an important role in the rescue of blocked DNA replication forks via replication fork reversal (RFR). RuvA specifically binds to HJ cruciform DNA, conferring on it an open structure. The RuvB hexamer acts as an ATP-dependent pump, pulling dsDNA into and through the RuvAB complex. RuvB forms 2 homohexamers on either side of HJ DNA bound by 1 or 2 RuvA tetramers; 4 subunits per hexamer contact DNA at a time. Coordinated motions by a converter formed by DNA-disengaged RuvB subunits stimulates ATP hydrolysis and nucleotide exchange. Immobilization of the converter enables RuvB to convert the ATP-contained energy into a lever motion, pulling 2 nucleotides of DNA out of the RuvA tetramer per ATP hydrolyzed, thus driving DNA branch migration. The RuvB motors rotate together with the DNA substrate, which together with the progressing nucleotide cycle form the mechanistic basis for DNA recombination by continuous HJ branch migration. Branch migration allows RuvC to scan DNA until it finds its consensus sequence, where it cleaves and resolves cruciform DNA. This is Holliday junction branch migration complex subunit RuvB from Cyanothece sp. (strain PCC 7425 / ATCC 29141).